A 223-amino-acid chain; its full sequence is MRCAHAPAPRTRYPTRAPSGPRPPSRSQAQTPPRSVPRLRPRHRHPQDPRSPGPAPRHRRPPRPDPRAPPARASYRRFRTWPSATSWERRRLSPGHRALARGPPARLGGEGPGAGDRRREGPDRSPRQPPVLPAAAAQPDSSSAQAPGPSTLRPAATARRKRRWATRGPAHPAFARAHGEAGAGRVRTSARAGSTCAGWALWRCALRWAERQVGALGAESRFP.

Residues 1–19 (MRCAHAPAPRTRYPTRAPS) show a composition bias toward low complexity. Residues 1-184 (MRCAHAPAPR…ARAHGEAGAG (184 aa)) form a disordered region. The segment covering 115-126 (GDRRREGPDRSP) has biased composition (basic and acidic residues). Positions 133–157 (PAAAAQPDSSSAQAPGPSTLRPAAT) are enriched in low complexity.

The chain is Putative HTLV-1-related endogenous sequence (HRES1) from Homo sapiens (Human).